Here is a 588-residue protein sequence, read N- to C-terminus: Urease subunit alpha (588 aa).

The region spanning glycine 149–phenylalanine 588 is the Urease domain. Residues histidine 154, histidine 156, and lysine 237 each coordinate Ni(2+). Lysine 237 carries the post-translational modification N6-carboxylysine. Position 239 (histidine 239) interacts with substrate. Histidine 266 and histidine 292 together coordinate Ni(2+). Histidine 340 serves as the catalytic Proton donor. Aspartate 380 lines the Ni(2+) pocket.

The protein belongs to the metallo-dependent hydrolases superfamily. Urease alpha subunit family. Heterotrimer of UreA (gamma), UreB (beta) and UreC (alpha) subunits. Three heterotrimers associate to form the active enzyme. The cofactor is Ni cation. Post-translationally, carboxylation allows a single lysine to coordinate two nickel ions.

Its subcellular location is the cytoplasm. The enzyme catalyses urea + 2 H2O + H(+) = hydrogencarbonate + 2 NH4(+). Its pathway is nitrogen metabolism; urea degradation; CO(2) and NH(3) from urea (urease route): step 1/1. This chain is Urease subunit alpha, found in Opitutus terrae (strain DSM 11246 / JCM 15787 / PB90-1).